The following is a 189-amino-acid chain: Transcription factor FapR (189 aa).

The protein belongs to the FapR family.

Its function is as follows. Transcriptional factor involved in regulation of membrane lipid biosynthesis by repressing genes involved in fatty acid and phospholipid metabolism. The polypeptide is Transcription factor FapR (Listeria monocytogenes serotype 4b (strain CLIP80459)).